The primary structure comprises 195 residues: MTITKRKNTFYTSQFISYMKGYYLHPDIRGNLVAFTSDDDVWLMTLEDMKPIRVTSGQGVAIRPKISPDGKKIAYTIIWLRKGKGGGDIFITGNGETKRITFFGSMNTRVLGWLSDDEILVLTDFHTPFPQWSETYKININDGTMEKIPFGPISNIAISGDIIVIARGYQDLPFWKGYKGGTKGEFLISYDKGNT.

It belongs to the peptidase S41B family.

The protein resides in the cytoplasm. In terms of biological role, degrades oligopeptides in a sequential manner. This is Putative Tricorn-like protease N-terminal subunit (triN) from Sulfurisphaera tokodaii (strain DSM 16993 / JCM 10545 / NBRC 100140 / 7) (Sulfolobus tokodaii).